The following is a 231-amino-acid chain: Somatolactin (231 aa).

Positions 1–24 (MLMFTAIQRGVWVALLWPHLLTAS) are cleaved as a signal peptide. 3 disulfide bridges follow: C29–C39, C89–C205, and C222–C230. N35 and N145 each carry an N-linked (GlcNAc...) asparagine glycan.

Belongs to the somatotropin/prolactin family. Pituitary gland.

The protein resides in the secreted. The protein is Somatolactin of Siganus guttatus (Orange-spotted spinefoot).